Reading from the N-terminus, the 72-residue chain is Translation initiation factor IF-1 (72 aa).

Residues 1–72 enclose the S1-like domain; sequence MSKQTAIEQD…TKGRISFRYK (72 aa).

Belongs to the IF-1 family. As to quaternary structure, component of the 30S ribosomal translation pre-initiation complex which assembles on the 30S ribosome in the order IF-2 and IF-3, IF-1 and N-formylmethionyl-tRNA(fMet); mRNA recruitment can occur at any time during PIC assembly.

The protein localises to the cytoplasm. In terms of biological role, one of the essential components for the initiation of protein synthesis. Stabilizes the binding of IF-2 and IF-3 on the 30S subunit to which N-formylmethionyl-tRNA(fMet) subsequently binds. Helps modulate mRNA selection, yielding the 30S pre-initiation complex (PIC). Upon addition of the 50S ribosomal subunit IF-1, IF-2 and IF-3 are released leaving the mature 70S translation initiation complex. The chain is Translation initiation factor IF-1 from Porphyromonas gingivalis (strain ATCC BAA-308 / W83).